The chain runs to 539 residues: CTP synthase (539 aa).

Residues 1–269 (MSATKYIFVT…DERVLSKLKL (269 aa)) form an amidoligase domain region. Ser-15 provides a ligand contact to CTP. Ser-15 lines the UTP pocket. Position 16-21 (16-21 (SLGKGI)) interacts with ATP. L-glutamine is bound at residue Tyr-56. Asp-73 contributes to the ATP binding site. The Mg(2+) site is built by Asp-73 and Glu-143. Residues 150–152 (DIE), 190–195 (KTKPTQ), and Lys-226 each bind CTP. Residues 190–195 (KTKPTQ) and Lys-226 each bind UTP. Residues 295–537 (NIALVGKYVE…VKAANDFAKG (243 aa)) form the Glutamine amidotransferase type-1 domain. Gly-357 is an L-glutamine binding site. Catalysis depends on Cys-384, which acts as the Nucleophile; for glutamine hydrolysis. Residues 385 to 388 (LGMQ), Glu-408, and Arg-465 contribute to the L-glutamine site. Residues His-510 and Glu-512 contribute to the active site.

Belongs to the CTP synthase family. As to quaternary structure, homotetramer.

It catalyses the reaction UTP + L-glutamine + ATP + H2O = CTP + L-glutamate + ADP + phosphate + 2 H(+). The enzyme catalyses L-glutamine + H2O = L-glutamate + NH4(+). It carries out the reaction UTP + NH4(+) + ATP = CTP + ADP + phosphate + 2 H(+). The protein operates within pyrimidine metabolism; CTP biosynthesis via de novo pathway; CTP from UDP: step 2/2. Allosterically activated by GTP, when glutamine is the substrate; GTP has no effect on the reaction when ammonia is the substrate. The allosteric effector GTP functions by stabilizing the protein conformation that binds the tetrahedral intermediate(s) formed during glutamine hydrolysis. Inhibited by the product CTP, via allosteric rather than competitive inhibition. Functionally, catalyzes the ATP-dependent amination of UTP to CTP with either L-glutamine or ammonia as the source of nitrogen. Regulates intracellular CTP levels through interactions with the four ribonucleotide triphosphates. This chain is CTP synthase, found in Cytophaga hutchinsonii (strain ATCC 33406 / DSM 1761 / CIP 103989 / NBRC 15051 / NCIMB 9469 / D465).